The sequence spans 308 residues: Bifunctional protein FolD (308 aa).

Residues 171–173, S198, and I239 contribute to the NADP(+) site; that span reads GRS.

It belongs to the tetrahydrofolate dehydrogenase/cyclohydrolase family. Homodimer.

The catalysed reaction is (6R)-5,10-methylene-5,6,7,8-tetrahydrofolate + NADP(+) = (6R)-5,10-methenyltetrahydrofolate + NADPH. It catalyses the reaction (6R)-5,10-methenyltetrahydrofolate + H2O = (6R)-10-formyltetrahydrofolate + H(+). Its pathway is one-carbon metabolism; tetrahydrofolate interconversion. In terms of biological role, catalyzes the oxidation of 5,10-methylenetetrahydrofolate to 5,10-methenyltetrahydrofolate and then the hydrolysis of 5,10-methenyltetrahydrofolate to 10-formyltetrahydrofolate. The polypeptide is Bifunctional protein FolD (Borreliella burgdorferi (strain ZS7) (Borrelia burgdorferi)).